Here is a 166-residue protein sequence, read N- to C-terminus: NADPH-dependent 7-cyano-7-deazaguanine reductase (166 aa).

C57 functions as the Thioimide intermediate in the catalytic mechanism. Catalysis depends on D64, which acts as the Proton donor. Substrate contacts are provided by residues 79–81 and 98–99; these read VES and HE.

This sequence belongs to the GTP cyclohydrolase I family. QueF type 1 subfamily.

The protein resides in the cytoplasm. The catalysed reaction is 7-aminomethyl-7-carbaguanine + 2 NADP(+) = 7-cyano-7-deazaguanine + 2 NADPH + 3 H(+). It participates in tRNA modification; tRNA-queuosine biosynthesis. Its function is as follows. Catalyzes the NADPH-dependent reduction of 7-cyano-7-deazaguanine (preQ0) to 7-aminomethyl-7-deazaguanine (preQ1). The protein is NADPH-dependent 7-cyano-7-deazaguanine reductase of Staphylococcus epidermidis (strain ATCC 35984 / DSM 28319 / BCRC 17069 / CCUG 31568 / BM 3577 / RP62A).